The chain runs to 155 residues: Cell division protein SepF (155 aa).

Residues 16-35 are compositionally biased toward acidic residues; it reads TEDEEEDVETVEESEDVEEE. A disordered region spans residues 16–44; that stretch reads TEDEEEDVETVEESEDVEEEESKKPQFIQ.

It belongs to the SepF family. Homodimer. Interacts with FtsZ.

It localises to the cytoplasm. Cell division protein that is part of the divisome complex and is recruited early to the Z-ring. Probably stimulates Z-ring formation, perhaps through the cross-linking of FtsZ protofilaments. Its function overlaps with FtsA. The protein is Cell division protein SepF of Acetivibrio thermocellus (strain ATCC 27405 / DSM 1237 / JCM 9322 / NBRC 103400 / NCIMB 10682 / NRRL B-4536 / VPI 7372) (Clostridium thermocellum).